A 1020-amino-acid polypeptide reads, in one-letter code: Protein translocase subunit SecA (1020 aa).

ATP is bound by residues Gln-99, 117–121 (GEGKT), and Asp-633. Residues 963 to 992 (NEQPSQEMAADEETQEESKIEENKPEPIVV) form a disordered region. A compositionally biased stretch (basic and acidic residues) spans 978 to 987 (EESKIEENKP). The Zn(2+) site is built by Cys-1002, Cys-1004, Cys-1013, and Cys-1014.

It belongs to the SecA family. As to quaternary structure, monomer and homodimer. Part of the essential Sec protein translocation apparatus which comprises SecA, SecYEG and auxiliary proteins SecDF. Other proteins may also be involved. Requires Zn(2+) as cofactor.

It is found in the cell inner membrane. Its subcellular location is the cytoplasm. It carries out the reaction ATP + H2O + cellular proteinSide 1 = ADP + phosphate + cellular proteinSide 2.. Its function is as follows. Part of the Sec protein translocase complex. Interacts with the SecYEG preprotein conducting channel. Has a central role in coupling the hydrolysis of ATP to the transfer of proteins into and across the cell membrane, serving as an ATP-driven molecular motor driving the stepwise translocation of polypeptide chains across the membrane. The sequence is that of Protein translocase subunit SecA from Protochlamydia amoebophila (strain UWE25).